The sequence spans 1063 residues: Structural polyprotein (1063 aa).

The tract at residues 1–131 is disordered; that stretch reads MASTTPITME…LGPPTNPFQA (131 aa). Residues 18–34 are compositionally biased toward low complexity; that stretch reads AQSRALRAGLAAGASQS. Residues 30–69 form a human C1QBP/SF2P32-binding region; the sequence is GASQSRRPRPPRQRDSSTSGDDSGRDSGGPRRRRGNRGRG. At Ser46 the chain carries Phosphoserine; by host. Over residues 59–69 the composition is skewed to basic residues; that stretch reads PRRRRGNRGRG. Basic and acidic residues predominate over residues 70–87; it reads QRKDWSRAPPPPEERQES. The span at 93–107 shows a compositional bias: pro residues; sequence APKPSRAPPQQPQPP. Residues Cys153 and Cys197 are joined by a disulfide bond. A functions as E2 signal peptide region spans residues 279-300; the sequence is GAPQAFLAGLLLAAVAVGTARA. Topologically, residues 301 to 534 are extracellular; the sequence is GLQPRADMAA…LWLATANALS (234 aa). Asn353, Asn371, Asn410, and Asn429 each carry an N-linked (GlcNAc...) asparagine; by host glycan. A helical transmembrane segment spans residues 535-555; it reads LDHAFAAFVLLVPWVLIFMVC. Residues 556-582 are Cytoplasmic-facing; that stretch reads RRACRRRGAAAALTAVVLQGYNPPAYG. Positions 563–582 are functions as E1 signal peptide; sequence GAAAALTAVVLQGYNPPAYG. Over 583-1028 the chain is Extracellular; sequence EEAFTYLCTA…QTWAEWAAAH (446 aa). Disulfide bonds link Cys590–Cys595, Cys619–Cys824, Cys641–Cys653, Cys699–Cys712, Cys758–Cys767, Cys807–Cys817, Cys931–Cys934, and Cys950–Cys983. The N-linked (GlcNAc...) asparagine; by host glycan is linked to Asn658. Ca(2+)-binding residues include Asn670 and Ala671. Positions 718 and 719 each coordinate Ca(2+). N-linked (GlcNAc...) asparagine; by host glycosylation is found at Asn759 and Asn791. O-linked (GalNAc...) threonine; by host glycosylation is found at Thr1011 and Thr1012. A helical membrane pass occupies residues 1029–1049; sequence WWQLTLGAICALLLAGLLACC. The Cytoplasmic portion of the chain corresponds to 1050 to 1063; it reads AKCLYYLRGAIAPR.

Homodimer; further assembles into homooligomer. Interacts with human C1QBP. Interacts (via N-terminus) with protease/methyltransferase p150. As to quaternary structure, heterodimer with spike glycoprotein E2. In terms of assembly, heterodimer with spike glycoprotein E1. In terms of processing, structural polyprotein: Specific enzymatic cleavages in vivo yield mature proteins. Two signal peptidase-mediated cleavages within the polyprotein produce the structural proteins capsid, E2, and E1. The E2 signal peptide remains attached to the C-terminus of the capsid protein after cleavage by the signal peptidase. Another signal peptide at E2 C-terminus directs E1 to the ER, with a similar mechanism. Post-translationally, contains three N-linked oligosaccharides. Capsid is phosphorylated on Ser-46 by host. This phosphorylation negatively regulates capsid protein RNA-binding activity. Dephosphorylated by human PP1A.

The protein resides in the virion. It localises to the host cytoplasm. It is found in the host mitochondrion. The protein localises to the virion membrane. Its subcellular location is the host Golgi apparatus membrane. Its function is as follows. Capsid protein interacts with genomic RNA and assembles into icosahedric core particles 65-70 nm in diameter. The resulting nucleocapsid eventually associates with the cytoplasmic domain of E2 at the cell membrane, leading to budding and formation of mature virions from host Golgi membranes. Phosphorylation negatively regulates RNA-binding activity, possibly delaying virion assembly during the viral replication phase. Capsid protein dimerizes and becomes disulfide-linked in the virion. Modulates genomic RNA replication. Modulates subgenomic RNA synthesis by interacting with human C1QBP/SF2P32. Induces both perinuclear clustering of mitochondria and the formation of electron-dense intermitochondrial plaques, both hallmarks of rubella virus infected cells. Induces apoptosis when expressed in transfected cells. In terms of biological role, responsible for viral attachment to target host cell, by binding to the cell receptor. Its transport to the plasma membrane depends on interaction with E1 protein. The surface glycoproteins display an irregular helical organization and a pseudo-tetrameric inner nucleocapsid arrangement. Class II viral fusion protein. Fusion activity is inactive as long as E1 is bound to E2 in mature virion. After virus attachment to target cell and clathrin-mediated endocytosis, acidification of the endosome would induce dissociation of E1/E2 heterodimer and concomitant trimerization of the E1 subunits. This E1 homotrimer is fusion active, and promotes release of viral nucleocapsid in cytoplasm after endosome and viral membrane fusion. The cytoplasmic tail of spike glycoprotein E1 modulates virus release. The surface glycoproteins display an irregular helical organization and a pseudo-tetrameric inner nucleocapsid arrangement. The chain is Structural polyprotein from Homo sapiens (Human).